Consider the following 80-residue polypeptide: Putative membrane protein insertion efficiency factor (80 aa).

The interval 61–80 (KTGKDPVPDRFSLKRNQEGE) is disordered. Residues 62–80 (TGKDPVPDRFSLKRNQEGE) show a composition bias toward basic and acidic residues.

The protein belongs to the UPF0161 family.

The protein localises to the cell membrane. In terms of biological role, could be involved in insertion of integral membrane proteins into the membrane. The protein is Putative membrane protein insertion efficiency factor of Streptococcus pneumoniae (strain P1031).